Reading from the N-terminus, the 585-residue chain is Mycosin-5 (585 aa).

A signal peptide spans 1–39 (MQRFGTGSSRSWCGRAGTATIAAVLLASGALTGLPPAYA). One can recognise a Peptidase S8 domain in the interval 83-521 (PKYMEMLNLN…YGVVDPVAAL (439 aa)). Catalysis depends on charge relay system residues Asp-109 and His-141. Over residues 163–173 (VPRRPVTIPTT) the composition is skewed to low complexity. Residues 163-269 (VPRRPVTIPT…PALGPPPDAF (107 aa)) are disordered. Pro residues-rich tracts occupy residues 196–224 (PAPP…PQPP) and 252–267 (NPHP…PPPD). Ser-466 acts as the Charge relay system in catalysis. The helical transmembrane segment at 552–572 (VPIWVAAGGLAGALLIGGAVF) threads the bilayer.

The protein belongs to the peptidase S8 family.

The protein localises to the cell membrane. The polypeptide is Mycosin-5 (Mycobacterium tuberculosis (strain ATCC 25618 / H37Rv)).